The sequence spans 255 residues: Small ribosomal subunit protein uS2 (255 aa).

The segment at 233–255 (DFVAEEAASEESLEELAEIVEGK) is disordered.

It belongs to the universal ribosomal protein uS2 family.

The polypeptide is Small ribosomal subunit protein uS2 (Lactococcus lactis subsp. cremoris (strain SK11)).